The sequence spans 615 residues: DNA mismatch repair protein MutL (615 aa).

The tract at residues 362–397 (HFAEPAVREPVAPRYSPAPASGSRPAASWPNAQPGY) is disordered. Residues 373-391 (APRYSPAPASGSRPAASWP) show a composition bias toward low complexity.

The protein belongs to the DNA mismatch repair MutL/HexB family.

This protein is involved in the repair of mismatches in DNA. It is required for dam-dependent methyl-directed DNA mismatch repair. May act as a 'molecular matchmaker', a protein that promotes the formation of a stable complex between two or more DNA-binding proteins in an ATP-dependent manner without itself being part of a final effector complex. This is DNA mismatch repair protein MutL from Escherichia coli O45:K1 (strain S88 / ExPEC).